A 381-amino-acid chain; its full sequence is Tryptophan--tRNA ligase (381 aa).

Residues 82–90 (PSLGMHIGH) carry the 'HIGH' region motif. Positions 254 to 258 (KMSSS) match the 'KMSKS' region motif.

This sequence belongs to the class-I aminoacyl-tRNA synthetase family.

The protein localises to the cytoplasm. It catalyses the reaction tRNA(Trp) + L-tryptophan + ATP = L-tryptophyl-tRNA(Trp) + AMP + diphosphate + H(+). The sequence is that of Tryptophan--tRNA ligase from Sulfolobus acidocaldarius (strain ATCC 33909 / DSM 639 / JCM 8929 / NBRC 15157 / NCIMB 11770).